The sequence spans 152 residues: ALK and LTK ligand 2 (152 aa).

The signal sequence occupies residues 1–24 (MRGPGHPLLLGLLLVLGAAGRGRG). Cystine bridges form between Cys111-Cys147 and Cys125-Cys134.

It belongs to the ALKAL family. In terms of assembly, homodimer; interchain disulfide bond is not required for homodimerization. As to expression, widely expressed with highest levels in adrenal gland and modest levels in pancreas, testis and uterus.

Its subcellular location is the secreted. It localises to the cell membrane. Cytokine that acts as a physiological ligand for receptor tyrosine kinases LTK and ALK, leading to their activation. Cytokine-binding is sufficient to activate LTK. In contrast, ALKAL2-driven activation of ALK is coupled with heparin-binding to ALK. Stimulation of ALK signaling is involved in neural development and regulation of energy expenditure. This is ALK and LTK ligand 2 from Homo sapiens (Human).